Here is a 130-residue protein sequence, read N- to C-terminus: Small ribosomal subunit protein uS9 (130 aa).

It belongs to the universal ribosomal protein uS9 family.

In Stutzerimonas stutzeri (strain A1501) (Pseudomonas stutzeri), this protein is Small ribosomal subunit protein uS9.